Here is a 246-residue protein sequence, read N- to C-terminus: Probable transcriptional regulatory protein WRi_002620 (246 aa).

A disordered region spans residues 1 to 22 (MAGHSQFSNIKHRKGAQDAKRS).

The protein belongs to the TACO1 family.

Its subcellular location is the cytoplasm. The polypeptide is Probable transcriptional regulatory protein WRi_002620 (Wolbachia sp. subsp. Drosophila simulans (strain wRi)).